The following is a 202-amino-acid chain: Small ribosomal subunit protein uS4c (202 aa).

An S4 RNA-binding domain is found at 90-153 (MRLDNVIFRL…KSETIISKNI (64 aa)).

This sequence belongs to the universal ribosomal protein uS4 family. In terms of assembly, part of the 30S ribosomal subunit. Contacts protein S5. The interaction surface between S4 and S5 is involved in control of translational fidelity.

The protein resides in the plastid. Its subcellular location is the chloroplast. One of the primary rRNA binding proteins, it binds directly to 16S rRNA where it nucleates assembly of the body of the 30S subunit. In terms of biological role, with S5 and S12 plays an important role in translational accuracy. This is Small ribosomal subunit protein uS4c (rps4) from Arbusculohypopterygium arbuscula (Moss).